Reading from the N-terminus, the 236-residue chain is Virion protein US10 homolog (236 aa).

Residues 1–32 (MDGAYGHVHNGSPMAVDGEESGAGTGTGAGAD) are disordered. Residues 21 to 31 (SGAGTGTGAGA) are compositionally biased toward gly residues. A zinc finger lies at 138–150 (CAYWCCLGHAFAC).

This sequence belongs to the herpesviridae US10 family. Post-translationally, phosphorylated.

It localises to the virion tegument. Its subcellular location is the host nucleus matrix. The chain is Virion protein US10 homolog from Equine herpesvirus 1 (strain Ab4p) (EHV-1).